We begin with the raw amino-acid sequence, 341 residues long: Elongation factor Ts (341 aa).

Positions 80–83 are involved in Mg(2+) ion dislocation from EF-Tu; that stretch reads TDFV.

The protein belongs to the EF-Ts family.

It localises to the cytoplasm. In terms of biological role, associates with the EF-Tu.GDP complex and induces the exchange of GDP to GTP. It remains bound to the aminoacyl-tRNA.EF-Tu.GTP complex up to the GTP hydrolysis stage on the ribosome. The chain is Elongation factor Ts from Lactobacillus helveticus (strain DPC 4571).